A 62-amino-acid polypeptide reads, in one-letter code: uncharacterized protein (62 aa).

A disordered region spans residues 1–62; the sequence is MTSTQNLKDK…PPKKSLSQLP (62 aa). The segment covering 7-29 has biased composition (basic and acidic residues); the sequence is LKDKFEEEIRQQKEGKGKKEKVW. The segment covering 32–43 has biased composition (polar residues); sequence HSDSSYNKQTAV.

This is an uncharacterized protein from Dictyostelium discoideum (Social amoeba).